Here is a 451-residue protein sequence, read N- to C-terminus: Bifunctional protein GlmU (451 aa).

Positions 1–217 (MKTLILAAGL…IDEVTGVNDR (217 aa)) are pyrophosphorylase. UDP-N-acetyl-alpha-D-glucosamine-binding positions include 6-9 (LAAG), Lys-20, Gln-68, 73-74 (GT), 95-97 (YGD), Gly-134, Glu-146, Asn-161, and Asn-215. Asp-97 provides a ligand contact to Mg(2+). Asn-215 lines the Mg(2+) pocket. The linker stretch occupies residues 218-238 (IQLSKLEKNMRKRINEKLMRE). The tract at residues 239-451 (GVRIIDPESV…GGNQNADSKE (213 aa)) is N-acetyltransferase. Arg-320 and Lys-338 together coordinate UDP-N-acetyl-alpha-D-glucosamine. Catalysis depends on His-350, which acts as the Proton acceptor. The UDP-N-acetyl-alpha-D-glucosamine site is built by Tyr-353 and Asn-364. Residues Ala-367, 373 to 374 (NY), Ser-392, Ala-410, and Arg-427 each bind acetyl-CoA.

It in the N-terminal section; belongs to the N-acetylglucosamine-1-phosphate uridyltransferase family. The protein in the C-terminal section; belongs to the transferase hexapeptide repeat family. As to quaternary structure, homotrimer. The cofactor is Mg(2+).

It localises to the cytoplasm. The enzyme catalyses alpha-D-glucosamine 1-phosphate + acetyl-CoA = N-acetyl-alpha-D-glucosamine 1-phosphate + CoA + H(+). The catalysed reaction is N-acetyl-alpha-D-glucosamine 1-phosphate + UTP + H(+) = UDP-N-acetyl-alpha-D-glucosamine + diphosphate. It functions in the pathway nucleotide-sugar biosynthesis; UDP-N-acetyl-alpha-D-glucosamine biosynthesis; N-acetyl-alpha-D-glucosamine 1-phosphate from alpha-D-glucosamine 6-phosphate (route II): step 2/2. Its pathway is nucleotide-sugar biosynthesis; UDP-N-acetyl-alpha-D-glucosamine biosynthesis; UDP-N-acetyl-alpha-D-glucosamine from N-acetyl-alpha-D-glucosamine 1-phosphate: step 1/1. The protein operates within bacterial outer membrane biogenesis; LPS lipid A biosynthesis. Its function is as follows. Catalyzes the last two sequential reactions in the de novo biosynthetic pathway for UDP-N-acetylglucosamine (UDP-GlcNAc). The C-terminal domain catalyzes the transfer of acetyl group from acetyl coenzyme A to glucosamine-1-phosphate (GlcN-1-P) to produce N-acetylglucosamine-1-phosphate (GlcNAc-1-P), which is converted into UDP-GlcNAc by the transfer of uridine 5-monophosphate (from uridine 5-triphosphate), a reaction catalyzed by the N-terminal domain. This Thermosipho africanus (strain TCF52B) protein is Bifunctional protein GlmU.